We begin with the raw amino-acid sequence, 425 residues long: Serine--tRNA ligase (425 aa).

231–233 lines the L-serine pocket; that stretch reads TAE. Residues 262–264 and Val278 each bind ATP; that span reads RTE. Glu285 is an L-serine binding site. 349 to 352 serves as a coordination point for ATP; the sequence is EVTS. Thr384 contributes to the L-serine binding site.

Belongs to the class-II aminoacyl-tRNA synthetase family. Type-1 seryl-tRNA synthetase subfamily. As to quaternary structure, homodimer. The tRNA molecule binds across the dimer.

The protein resides in the cytoplasm. It carries out the reaction tRNA(Ser) + L-serine + ATP = L-seryl-tRNA(Ser) + AMP + diphosphate + H(+). The catalysed reaction is tRNA(Sec) + L-serine + ATP = L-seryl-tRNA(Sec) + AMP + diphosphate + H(+). The protein operates within aminoacyl-tRNA biosynthesis; selenocysteinyl-tRNA(Sec) biosynthesis; L-seryl-tRNA(Sec) from L-serine and tRNA(Sec): step 1/1. Functionally, catalyzes the attachment of serine to tRNA(Ser). Is also able to aminoacylate tRNA(Sec) with serine, to form the misacylated tRNA L-seryl-tRNA(Sec), which will be further converted into selenocysteinyl-tRNA(Sec). In Dictyoglomus thermophilum (strain ATCC 35947 / DSM 3960 / H-6-12), this protein is Serine--tRNA ligase.